The primary structure comprises 1130 residues: Tyrosine-protein kinase ABL1 (1130 aa).

The interval 1 to 60 is CAP; it reads MLEICLKLVGCKSKKGLSSSSSCYLEEALQRPVASDFEPQGLSEAARWNSKENLLAGPSE. L2 is lipidated: N-myristoyl glycine. Residue S50 is modified to Phosphoserine. The region spanning 61–121 is the SH3 domain; the sequence is NDPNLFVALY…PSNYITPVNS (61 aa). Y70 is subject to Phosphotyrosine; by autocatalysis. Phosphotyrosine is present on residues Y115, Y128, Y139, Y172, Y185, and Y215. Residues 127-217 form the SH2 domain; the sequence is WYHGPVSRNA…GLITTLHYPA (91 aa). Y226 is modified (phosphotyrosine; by autocatalysis). Phosphoserine is present on S229. The Protein kinase domain occupies 242–493; that stretch reads ITMKHKLGGG…PSFAEIHQAF (252 aa). 248 to 256 contributes to the ATP binding site; sequence LGGGQYGEV. Residues Y253 and Y257 each carry the phosphotyrosine modification. Residues K271 and 316-322 contribute to the ATP site; that span reads EFMTYGN. The active-site Proton acceptor is D363. The short motif at 381-405 is the Kinase activation loop element; that stretch reads DFGLSRLMTGDTYTAHAGAKFPIKW. The residue at position 393 (Y393) is a Phosphotyrosine; by autocatalysis and SRC-type Tyr-kinases. Y413 is subject to Phosphotyrosine. Phosphoserine occurs at positions 446, 559, and 569. The disordered stretch occupies residues 518–996; the sequence is AVSTLLQAPE…SASSALAGDQ (479 aa). A compositionally biased stretch (basic and acidic residues) spans 537–566; it reads RAAEHRDTTDVPEMPHSKGQGESDPLDHEP. Over residues 586–597 the composition is skewed to basic and acidic residues; that stretch reads EDERLLPKDKKT. A Nuclear localization signal 1 motif is present at residues 605–609; sequence KKKKK. Phosphoserine; by PAK2 is present on residues S618 and S619. 3 positions are modified to phosphoserine: S620, S659, and S683. Over residues 620–640 the composition is skewed to basic and acidic residues; it reads SFREMDGQPERRGAGEEEGRD. Over residues 689 to 698 the composition is skewed to polar residues; the sequence is KSSTLTSSRL. The Nuclear localization signal 2 signature appears at 709–715; it reads SSKRFLR. Residue K711 is modified to N6-acetyllysine; by EP300. Phosphoserine is present on S718. Phosphothreonine is present on residues T735 and T751. The span at 740 to 752 shows a compositional bias: polar residues; it reads LQSTGRQFDSSTF. Over residues 755-774 the composition is skewed to basic and acidic residues; it reads HKSEKPALPRKRAGENRSDQ. A Nuclear localization signal 3 motif is present at residues 762-769; that stretch reads LPRKRAGE. T781 carries the post-translational modification Phosphothreonine. Basic and acidic residues predominate over residues 788-802; sequence KKNEEAADEVFKDIM. Phosphothreonine is present on residues T814, T823, T844, and T852. S855 is modified (phosphoserine). Residues 869–968 are DNA-binding; that stretch reads PAEESRVRRH…VLPATPKPQS (100 aa). Over residues 881 to 891 the composition is skewed to basic and acidic residues; that stretch reads SSESPGRDKGK. The segment covering 905–915 has biased composition (low complexity); sequence ASAGKAGGKPS. S917 bears the Phosphoserine mark. The interval 953–1130 is F-actin-binding; the sequence is EGLKKPVLPA…VKEISDIVQR (178 aa). Residues 965 to 975 are compositionally biased toward polar residues; sequence KPQSAKPSGTP. A Phosphoserine modification is found at S977. Over residues 984–993 the composition is skewed to low complexity; it reads TLPSASSALA. Positions 1090–1100 match the Nuclear export signal motif; it reads LENNLRELQIC.

It belongs to the protein kinase superfamily. Tyr protein kinase family. ABL subfamily. As to quaternary structure, interacts with SORBS1 following insulin stimulation. Found in a trimolecular complex containing CDK5 and CABLES1. Interacts with CABLES1 and PSTPIP1. Interacts with ZDHHC16, ITGB1 and HCK. Interacts with STX17; probably phosphorylates STX17. Interacts with INPPL1/SHIP2. Interacts with the 14-3-3 proteins, YWHAB, YWHAE, YWHAG, YWHAH, SFN and YWHAZ; the interaction with 14-3-3 proteins requires phosphorylation on Thr-735 and, sequesters ABL1 into the cytoplasm. Interacts with ABI1, ABI2, BCR, CRK, FGR, FYN, HCK, LYN, PSMA7 RAD9A, RAD51, RAD52, TP73 and WASF3. A complex made of ABL1, CTTN and MYLK regulates cortical actin-based cytoskeletal rearrangement critical to sphingosine 1-phosphate (S1P)-mediated endothelial cell (EC) barrier enhancement. Interacts (via SH3 domain) with CASP9; the interaction is direct and increases in the response of cells to genotoxic stress and ABL1/c-Abl activation. Found in a complex with ABL1, ABL2, CRK and UNC119; leading to the inhibition of CRK phosphorylation by ABL kinases. Interacts with TBX21. Interacts with NEDD9/HEF1; interaction is induced by CXCL12 promotion of ABL-mediated phosphorylation of NEDD9/HEF1. Mg(2+) serves as cofactor. In terms of processing, acetylated at Lys-711 by EP300 which promotes the cytoplasmic translocation. Post-translationally, phosphorylation at Tyr-70 by members of the SRC family of kinases disrupts SH3 domain-based autoinhibitory interactions and intermolecular associations, such as that with ABI1, and also enhances kinase activity. Phosphorylation at Tyr-226 and Tyr-393 correlate with increased activity. DNA damage-induced activation of ABL1 requires the function of ATM and Ser-446 phosphorylation. Phosphorylation at Ser-569 has been attributed to a CDC2-associated kinase and is coupled to cell division. Phosphorylation at Ser-618 and Ser-619 by PAK2 increases binding to CRK and reduces binding to ABI1. Phosphorylation on Thr-735 is required for binding 14-3-3 proteins for cytoplasmic translocation. Phosphorylated by PRKDC. Polyubiquitinated. Polyubiquitination of ABL1 leads to degradation. In terms of tissue distribution, widely expressed.

It is found in the cytoplasm. It localises to the cytoskeleton. The protein resides in the nucleus. The protein localises to the mitochondrion. Its subcellular location is the nucleus membrane. The catalysed reaction is L-tyrosyl-[protein] + ATP = O-phospho-L-tyrosyl-[protein] + ADP + H(+). With respect to regulation, stabilized in the inactive form by an association between the SH3 domain and the SH2-TK linker region, interactions of the N-terminal cap, and contributions from an N-terminal myristoyl group and phospholipids. Activated by autophosphorylation as well as by SRC-family kinase-mediated phosphorylation. Activated by RIN1 binding to the SH2 and SH3 domains. Also stimulated by cell death inducers and DNA-damage. Phosphatidylinositol 4,5-bisphosphate (PIP2), a highly abundant phosphoinositide known to regulate cytoskeletal and membrane proteins, also inhibits the tyrosine kinase activity. Activated by 5-(1,3-diaryl-1H-pyrazol-4-yl)hydantoin, 5-[3-(4-fluorophenyl)-1-phenyl-1H-pyrazol-4-yl]-2,4-imidazolidinedione (DPH). Inhibited by ABI1, whose activity is controlled by ABL1 itself through tyrosine phosphorylation. Also inhibited by imatinib mesylate (Gleevec) which is used for the treatment of chronic myeloid leukemia (CML), and by VX-680, an inhibitor that also acts on imatinib-resistant mutants. In terms of biological role, non-receptor tyrosine-protein kinase that plays a role in many key processes linked to cell growth and survival such as cytoskeleton remodeling in response to extracellular stimuli, cell motility and adhesion, receptor endocytosis, autophagy, DNA damage response and apoptosis. Coordinates actin remodeling through tyrosine phosphorylation of proteins controlling cytoskeleton dynamics like WASF3 (involved in branch formation); ANXA1 (involved in membrane anchoring); DBN1, DBNL, CTTN, RAPH1 and ENAH (involved in signaling); or MAPT and PXN (microtubule-binding proteins). Phosphorylation of WASF3 is critical for the stimulation of lamellipodia formation and cell migration. Involved in the regulation of cell adhesion and motility through phosphorylation of key regulators of these processes such as BCAR1, CRK, CRKL, DOK1, EFS or NEDD9. Phosphorylates multiple receptor tyrosine kinases and more particularly promotes endocytosis of EGFR, facilitates the formation of neuromuscular synapses through MUSK, inhibits PDGFRB-mediated chemotaxis and modulates the endocytosis of activated B-cell receptor complexes. Other substrates which are involved in endocytosis regulation are the caveolin (CAV1) and RIN1. Moreover, ABL1 regulates the CBL family of ubiquitin ligases that drive receptor down-regulation and actin remodeling. Phosphorylation of CBL leads to increased EGFR stability. Involved in late-stage autophagy by regulating positively the trafficking and function of lysosomal components. ABL1 targets to mitochondria in response to oxidative stress and thereby mediates mitochondrial dysfunction and cell death. In response to oxidative stress, phosphorylates serine/threonine kinase PRKD2 at 'Tyr-717'. ABL1 is also translocated in the nucleus where it has DNA-binding activity and is involved in DNA-damage response and apoptosis. Many substrates are known mediators of DNA repair: DDB1, DDB2, ERCC3, ERCC6, RAD9A, RAD51, RAD52 or WRN. Activates the proapoptotic pathway when the DNA damage is too severe to be repaired. Phosphorylates TP73, a primary regulator for this type of damage-induced apoptosis. Phosphorylates the caspase CASP9 on 'Tyr-153' and regulates its processing in the apoptotic response to DNA damage. Phosphorylates PSMA7 that leads to an inhibition of proteasomal activity and cell cycle transition blocks. ABL1 also acts as a regulator of multiple pathological signaling cascades during infection. Several known tyrosine-phosphorylated microbial proteins have been identified as ABL1 substrates. This is the case of A36R of Vaccinia virus, Tir (translocated intimin receptor) of pathogenic E.coli and possibly Citrobacter, CagA (cytotoxin-associated gene A) of H.pylori, or AnkA (ankyrin repeat-containing protein A) of A.phagocytophilum. Pathogens can highjack ABL1 kinase signaling to reorganize the host actin cytoskeleton for multiple purposes, like facilitating intracellular movement and host cell exit. Finally, functions as its own regulator through autocatalytic activity as well as through phosphorylation of its inhibitor, ABI1. Regulates T-cell differentiation in a TBX21-dependent manner. Positively regulates chemokine-mediated T-cell migration, polarization, and homing to lymph nodes and immune-challenged tissues, potentially via activation of NEDD9/HEF1 and RAP1. Phosphorylates TBX21 on tyrosine residues leading to an enhancement of its transcriptional activator activity. The sequence is that of Tyrosine-protein kinase ABL1 (ABL1) from Homo sapiens (Human).